A 328-amino-acid chain; its full sequence is MKFISNNNITDPTLNLAMEEYVLKNLPAEESYFLFYINRPSIIVGKNQNTIEEVNQTYIDAHNIDVVRRISGGGAVYHDTGNLNFSFITDDDGNSFHNFQKFTEPIVQALQSLGVNAELTGRNDIQVGQAKISGNAMVKVKNRMFSHGTLMLNSDLDEVQNALKVNPAKIKSKGIKSVRKRVANIQEFLNDPLEIEEFKKIILKTIFGETEVEEYKLTDEDWENIEKLSNDKYRTWAWNYGRNPKYNFEREEKFEKGFVQIKFDVKRGKIEHAKIFGDFFGVGDVTDLENALVGCLHDFEHIEEALSEYDLYHYFGDIDRHELIRLMS.

The BPL/LPL catalytic domain occupies proline 27–glutamate 214. ATP is bound by residues arginine 69, glycine 74–tyrosine 77, and lysine 131. Lysine 131 is a (R)-lipoate binding site.

The enzyme catalyses L-lysyl-[lipoyl-carrier protein] + (R)-lipoate + ATP = N(6)-[(R)-lipoyl]-L-lysyl-[lipoyl-carrier protein] + AMP + diphosphate + H(+). Its pathway is protein modification; protein lipoylation via exogenous pathway; protein N(6)-(lipoyl)lysine from lipoate: step 1/2. It participates in protein modification; protein lipoylation via exogenous pathway; protein N(6)-(lipoyl)lysine from lipoate: step 2/2. Its function is as follows. Catalyzes the lipoylation of proteins, such as GcvH (SAV0833) and GcvH-L (SAV0324), likely via the ATP-dependent activation of lipoate to lipoyl-AMP and the transfer of the activated lipoyl onto the lipoyl domain of the target protein. In Staphylococcus aureus (strain Mu50 / ATCC 700699), this protein is Lipoate--protein ligase 1.